The primary structure comprises 782 residues: Polyribonucleotide nucleotidyltransferase (782 aa).

Mg(2+) contacts are provided by D514 and D520. Residues 580–639 (PRIITIKIPVDQIGAVIGPKGKIINQIQDDTGAEITIEDDGTIYIGATEGTAAEAARAAI) form the KH domain. The region spanning 651–723 (GERYLGTVVK…ARGKLSLVPV (73 aa)) is the S1 motif domain. Over residues 734–753 (AGAGESAASGGAPRSAGGPQ) the composition is skewed to low complexity. Residues 734 to 782 (AGAGESAASGGAPRSAGGPQPREHQGPGRPRGRGGDHGGEGRQRTRRRH) are disordered. Positions 766 to 776 (RGGDHGGEGRQ) are enriched in basic and acidic residues.

This sequence belongs to the polyribonucleotide nucleotidyltransferase family. It depends on Mg(2+) as a cofactor.

Its subcellular location is the cytoplasm. It carries out the reaction RNA(n+1) + phosphate = RNA(n) + a ribonucleoside 5'-diphosphate. Functionally, involved in mRNA degradation. Catalyzes the phosphorolysis of single-stranded polyribonucleotides processively in the 3'- to 5'-direction. This chain is Polyribonucleotide nucleotidyltransferase, found in Acidothermus cellulolyticus (strain ATCC 43068 / DSM 8971 / 11B).